A 256-amino-acid polypeptide reads, in one-letter code: Flap endonuclease Xni (256 aa).

Mg(2+) is bound at residue Asp105. In terms of domain architecture, 5'-3' exonuclease spans 164–250 (SQFIDFLAMA…LNTRLANFRV (87 aa)). Met172, Ala173, Pro181, Ile183, and Ile186 together coordinate K(+). The interaction with DNA stretch occupies residues 185-190 (GIGPKS).

Belongs to the Xni family. Mg(2+) is required as a cofactor. Requires K(+) as cofactor.

Functionally, has flap endonuclease activity. During DNA replication, flap endonucleases cleave the 5'-overhanging flap structure that is generated by displacement synthesis when DNA polymerase encounters the 5'-end of a downstream Okazaki fragment. The protein is Flap endonuclease Xni of Shewanella loihica (strain ATCC BAA-1088 / PV-4).